The following is an 841-amino-acid chain: Probable inorganic carbon transporter subunit DabA 1 (841 aa).

Residues Cys352, Asp354, His536, and Cys551 each coordinate Zn(2+).

The protein belongs to the inorganic carbon transporter (TC 9.A.2) DabA family. In terms of assembly, forms a complex with DabB. Zn(2+) is required as a cofactor.

It localises to the cell inner membrane. Its function is as follows. Part of an energy-coupled inorganic carbon pump. In Bradyrhizobium sp. (strain ORS 278), this protein is Probable inorganic carbon transporter subunit DabA 1.